The chain runs to 250 residues: Ubiquinone/menaquinone biosynthesis C-methyltransferase UbiE (250 aa).

S-adenosyl-L-methionine-binding positions include Thr-74, Asp-94, 122 to 123 (DA), and Ser-139.

The protein belongs to the class I-like SAM-binding methyltransferase superfamily. MenG/UbiE family.

It carries out the reaction a 2-demethylmenaquinol + S-adenosyl-L-methionine = a menaquinol + S-adenosyl-L-homocysteine + H(+). The enzyme catalyses a 2-methoxy-6-(all-trans-polyprenyl)benzene-1,4-diol + S-adenosyl-L-methionine = a 5-methoxy-2-methyl-3-(all-trans-polyprenyl)benzene-1,4-diol + S-adenosyl-L-homocysteine + H(+). It functions in the pathway quinol/quinone metabolism; menaquinone biosynthesis; menaquinol from 1,4-dihydroxy-2-naphthoate: step 2/2. Its pathway is cofactor biosynthesis; ubiquinone biosynthesis. In terms of biological role, methyltransferase required for the conversion of demethylmenaquinol (DMKH2) to menaquinol (MKH2) and the conversion of 2-polyprenyl-6-methoxy-1,4-benzoquinol (DDMQH2) to 2-polyprenyl-3-methyl-6-methoxy-1,4-benzoquinol (DMQH2). This is Ubiquinone/menaquinone biosynthesis C-methyltransferase UbiE from Paracoccus denitrificans (strain Pd 1222).